A 556-amino-acid chain; its full sequence is MMNKLYIGNLSPAVTVDDLRQLFGDRKLPLAGQVLLKSGYAFVDYPDQNWAIRAIETLSGKVELHGKIMEVDYSVSKKLRSRKIQIRNIPPHLQWEVLDGLLAQYGTVENVEQVNTDTETAVVNVTYATREEAKIAVEKLSGHQFENYSFKISYIPDEEVSSPSPPQRAQRGDHSSREQGHAPGGTSQARQIDFPLRILVPTQFVGAIIGKEGLTIKNITKQTQSRVDIHRKENSGAAEKPVTIHATPEGTSEACRMILEIMQKEADETKLAEEIPLKILAHNGLVGRLIGKEGRNLKKIEHETGTKITISSLQDLSIYNPERTITVKGTVEACASAEIEIMKKLREAFENDMLAVNTHSGYFSSLYPHHQFGPFPHHHSYPEQEIVNLFIPTQAVGAIIGKKGAHIKQLARFAGASIKIAPAEGPDVSERMVIITGPPEAQFKAQGRIFGKLKEENFFNPKEEVKLEAHIRVPSSTAGRVIGKGGKTVNELQNLTSAEVIVPRDQTPDENEEVIVRIIGHFFASQTAQRKIREIVQQVKQQEQKYPQGVASQCSK.

2 RRM domains span residues 3-76 (NKLY…YSVS) and 82-157 (RKIQ…YIPD). A Phosphoserine modification is found at serine 11. Residues 156 to 188 (PDEEVSSPSPPQRAQRGDHSSREQGHAPGGTSQ) form a disordered region. Phosphoserine occurs at positions 162 and 164. Positions 170–180 (QRGDHSSREQG) are enriched in basic and acidic residues. 4 consecutive KH domains span residues 193 to 258 (DFPL…CRMI), 274 to 341 (EIPL…EIEI), 384 to 449 (QEIV…QGRI), and 466 to 532 (KLEA…QRKI). Threonine 507 carries the post-translational modification Phosphothreonine.

Belongs to the RRM IMP/VICKZ family. As to quaternary structure, can form homooligomers and heterooligomers with IGF2BP1 and IGF2BP3 in an RNA-dependent manner. Interacts with HNRPD. Interacts with IGF2BP1. Interacts with ELAVL1, DHX9, HNRNPU, MATR3 and PABPC1.

The protein resides in the nucleus. Its subcellular location is the cytoplasm. It localises to the P-body. The protein localises to the stress granule. Its function is as follows. RNA-binding factor that recruits target transcripts to cytoplasmic protein-RNA complexes (mRNPs). This transcript 'caging' into mRNPs allows mRNA transport and transient storage. It also modulates the rate and location at which target transcripts encounter the translational apparatus and shields them from endonuclease attacks or microRNA-mediated degradation. Preferentially binds to N6-methyladenosine (m6A)-containing mRNAs and increases their stability. Binds to the 5'-UTR of the insulin-like growth factor 2 (IGF2) mRNAs. Binding is isoform-specific. Binds to beta-actin/ACTB and MYC transcripts. Increases MYC mRNA stability by binding to the coding region instability determinant (CRD) and binding is enhanced by m6A-modification of the CRD. The sequence is that of Insulin-like growth factor 2 mRNA-binding protein 2 (IGF2BP2) from Pongo abelii (Sumatran orangutan).